The primary structure comprises 232 residues: MTKHGKRIRGIQETYDLAKSYSLGEAIDILKQCPTVRFDQTVDVSVKLGIDPRKSDQQVRGSVSLPHGTGKVLRILVFAAGDKAAEAIEAGADFVGSDDLVEKIKGGWVDFDVAVATPDMMREVGKLGKVLGPRNLMPTPKAGTVTTDVVKTIAELRKGKIEFKADRAGVCNVGVAKLSFDSAQIKENVEALCAALVKAKPATAKGQYLVNFTISSTMGPGVTVDTRELIAL.

The protein belongs to the universal ribosomal protein uL1 family. In terms of assembly, part of the 50S ribosomal subunit.

In terms of biological role, binds directly to 23S rRNA. The L1 stalk is quite mobile in the ribosome, and is involved in E site tRNA release. Protein L1 is also a translational repressor protein, it controls the translation of the L11 operon by binding to its mRNA. In Chlamydia trachomatis serovar L2b (strain UCH-1/proctitis), this protein is Large ribosomal subunit protein uL1.